Consider the following 299-residue polypeptide: Aspartate carbamoyltransferase catalytic subunit (299 aa).

The carbamoyl phosphate site is built by Arg-51 and Thr-52. Lys-79 is an L-aspartate binding site. 3 residues coordinate carbamoyl phosphate: Arg-101, His-130, and Gln-133. Residues Arg-163 and Arg-215 each contribute to the L-aspartate site. Residues Gly-256 and Pro-257 each coordinate carbamoyl phosphate.

Belongs to the aspartate/ornithine carbamoyltransferase superfamily. ATCase family. As to quaternary structure, heterododecamer (2C3:3R2) of six catalytic PyrB chains organized as two trimers (C3), and six regulatory PyrI chains organized as three dimers (R2).

The enzyme catalyses carbamoyl phosphate + L-aspartate = N-carbamoyl-L-aspartate + phosphate + H(+). It functions in the pathway pyrimidine metabolism; UMP biosynthesis via de novo pathway; (S)-dihydroorotate from bicarbonate: step 2/3. In terms of biological role, catalyzes the condensation of carbamoyl phosphate and aspartate to form carbamoyl aspartate and inorganic phosphate, the committed step in the de novo pyrimidine nucleotide biosynthesis pathway. The polypeptide is Aspartate carbamoyltransferase catalytic subunit (Ehrlichia chaffeensis (strain ATCC CRL-10679 / Arkansas)).